A 389-amino-acid chain; its full sequence is Chitin-binding protein CbpD (389 aa).

The first 25 residues, Met1–Ala25, serve as a signal peptide directing secretion. Residues His26–Ser208 enclose the Chitin-binding type-4 domain. Tyr37 carries the post-translational modification Phosphotyrosine. Ser210 bears the Phosphoserine mark.

Its subcellular location is the secreted. In terms of biological role, binds but does not hydrolyze chitin. This chain is Chitin-binding protein CbpD (cpbD), found in Pseudomonas aeruginosa (strain UCBPP-PA14).